The following is a 242-amino-acid chain: Biosynthetic peptidoglycan transglycosylase (242 aa).

A helical membrane pass occupies residues 18–38 (VIMAVLCIAILYQLWMFSLVV).

Belongs to the glycosyltransferase 51 family.

The protein resides in the cell inner membrane. It carries out the reaction [GlcNAc-(1-&gt;4)-Mur2Ac(oyl-L-Ala-gamma-D-Glu-L-Lys-D-Ala-D-Ala)](n)-di-trans,octa-cis-undecaprenyl diphosphate + beta-D-GlcNAc-(1-&gt;4)-Mur2Ac(oyl-L-Ala-gamma-D-Glu-L-Lys-D-Ala-D-Ala)-di-trans,octa-cis-undecaprenyl diphosphate = [GlcNAc-(1-&gt;4)-Mur2Ac(oyl-L-Ala-gamma-D-Glu-L-Lys-D-Ala-D-Ala)](n+1)-di-trans,octa-cis-undecaprenyl diphosphate + di-trans,octa-cis-undecaprenyl diphosphate + H(+). It functions in the pathway cell wall biogenesis; peptidoglycan biosynthesis. Its function is as follows. Peptidoglycan polymerase that catalyzes glycan chain elongation from lipid-linked precursors. This chain is Biosynthetic peptidoglycan transglycosylase, found in Bordetella bronchiseptica (strain ATCC BAA-588 / NCTC 13252 / RB50) (Alcaligenes bronchisepticus).